Consider the following 196-residue polypeptide: NADH-quinone oxidoreductase subunit B (196 aa).

The [4Fe-4S] cluster site is built by Cys75, Cys76, Cys140, and Cys170.

It belongs to the complex I 20 kDa subunit family. NDH-1 is composed of 14 different subunits. Subunits NuoB, C, D, E, F, and G constitute the peripheral sector of the complex. It depends on [4Fe-4S] cluster as a cofactor.

Its subcellular location is the cell inner membrane. The enzyme catalyses a quinone + NADH + 5 H(+)(in) = a quinol + NAD(+) + 4 H(+)(out). Its function is as follows. NDH-1 shuttles electrons from NADH, via FMN and iron-sulfur (Fe-S) centers, to quinones in the respiratory chain. Couples the redox reaction to proton translocation (for every two electrons transferred, four hydrogen ions are translocated across the cytoplasmic membrane), and thus conserves the redox energy in a proton gradient. This chain is NADH-quinone oxidoreductase subunit B, found in Caulobacter sp. (strain K31).